A 166-amino-acid chain; its full sequence is Large ribosomal subunit protein uL10 (166 aa).

This sequence belongs to the universal ribosomal protein uL10 family. Part of the ribosomal stalk of the 50S ribosomal subunit. The N-terminus interacts with L11 and the large rRNA to form the base of the stalk. The C-terminus forms an elongated spine to which L12 dimers bind in a sequential fashion forming a multimeric L10(L12)X complex.

In terms of biological role, forms part of the ribosomal stalk, playing a central role in the interaction of the ribosome with GTP-bound translation factors. This is Large ribosomal subunit protein uL10 from Phytoplasma australiense.